A 305-amino-acid polypeptide reads, in one-letter code: Sulfate adenylyltransferase subunit 2 (305 aa).

It belongs to the PAPS reductase family. CysD subfamily. In terms of assembly, heterodimer composed of CysD, the smaller subunit, and CysN.

It carries out the reaction sulfate + ATP + H(+) = adenosine 5'-phosphosulfate + diphosphate. It functions in the pathway sulfur metabolism; hydrogen sulfide biosynthesis; sulfite from sulfate: step 1/3. Its function is as follows. With CysN forms the ATP sulfurylase (ATPS) that catalyzes the adenylation of sulfate producing adenosine 5'-phosphosulfate (APS) and diphosphate, the first enzymatic step in sulfur assimilation pathway. APS synthesis involves the formation of a high-energy phosphoric-sulfuric acid anhydride bond driven by GTP hydrolysis by CysN coupled to ATP hydrolysis by CysD. The sequence is that of Sulfate adenylyltransferase subunit 2 from Pseudomonas fluorescens (strain Pf0-1).